We begin with the raw amino-acid sequence, 290 residues long: Glycine--tRNA ligase alpha subunit (290 aa).

The protein belongs to the class-II aminoacyl-tRNA synthetase family. Tetramer of two alpha and two beta subunits.

The protein resides in the cytoplasm. The enzyme catalyses tRNA(Gly) + glycine + ATP = glycyl-tRNA(Gly) + AMP + diphosphate. The sequence is that of Glycine--tRNA ligase alpha subunit from Zymomonas mobilis subsp. mobilis (strain ATCC 31821 / ZM4 / CP4).